A 720-amino-acid polypeptide reads, in one-letter code: B3 domain-containing transcription factor ABI3 (720 aa).

2 disordered regions span residues 122 to 146 and 324 to 360; these read RSDGEDPTPNQNQYASGNCDDSSGA and FQQDPFQNPNPNNNNLIPPSDQTCFSPSTWVPPPPQQ. Residues 129-146 are compositionally biased toward polar residues; that stretch reads TPNQNQYASGNCDDSSGA. Over residues 324-344 the composition is skewed to low complexity; sequence FQQDPFQNPNPNNNNLIPPSD. Positions 572–674 form a DNA-binding region, TF-B3; that stretch reads LQKVLKQSDV…KYLIRGVKVR (103 aa). The segment at 675–720 is disordered; the sequence is QPSGQKPEAPPSSAATKRQNKSQRNINNNSPSANVVVASPTSQTVK. The span at 687–700 shows a compositional bias: polar residues; it reads SAATKRQNKSQRNI. Low complexity predominate over residues 701–714; that stretch reads NNNSPSANVVVASP.

As to quaternary structure, interacts (via C-terminus) with SPK1, SCAR3, ABI5, APRR1, AIP2, AIP3 and AIP4. Binds to BZIP10 and BZIP25 and forms complexes made of ABI3, BZIP53 and BZIP25 or BZIP10. Post-translationally, ubiquitinated by AIP2. Ubiquitination probably leads to its subsequent degradation, thus negatively regulating ABA signaling. In terms of tissue distribution, isoform 2 accumulates only at the end of seed maturation.

It is found in the nucleus. The protein resides in the cytoplasm. Its function is as follows. Participates in abscisic acid-regulated gene expression during seed development. Regulates the transcription of SGR1 and SGR2 that are involved in leaf and embryo degreening. This chain is B3 domain-containing transcription factor ABI3 (ABI3), found in Arabidopsis thaliana (Mouse-ear cress).